The following is a 330-amino-acid chain: G-protein coupled receptor 3 (330 aa).

At 1-42 (MMWGAGSSMAWFSAGSGSVNVSSVDPVEEPTGPATLLPSPRA) the chain is on the extracellular side. N-linked (GlcNAc...) asparagine glycosylation is present at N20. A helical transmembrane segment spans residues 43 to 62 (WDVVLCISGTLVSCENALVV). Residues 63–74 (AIIVGTPAFRAP) are Cytoplasmic-facing. A helical membrane pass occupies residues 75 to 98 (MFLLVGSLAVADLLAGLGLVLHFA). The Extracellular segment spans residues 99-110 (ADFCIGSPEMSL). A helical transmembrane segment spans residues 111–132 (MLVGVLAMAFTASIGSLLAITV). Over 133–153 (DRYLSLYNALTYYSETTVTRT) the chain is Cytoplasmic. The chain crosses the membrane as a helical span at residues 154-173 (YVMLALVWVGALGLGLVPVL). Residues 174 to 198 (AWNCRDGLTTCGVVYPLSKNHLVVL) are Extracellular-facing. A helical transmembrane segment spans residues 199 to 217 (AIAFFMVFGIMLQLYAQIC). The Cytoplasmic portion of the chain corresponds to 218 to 245 (RIVCRHAQQIALQRHLLPASHYVATRKG). A helical transmembrane segment spans residues 246-272 (IATLAVVLGAFAACWLPFTVYCLLGDA). Residues 273–277 (DSPRL) lie on the Extracellular side of the membrane. A helical membrane pass occupies residues 278-299 (YTYLTLLPATYNSMINPVIYAF). The Cytoplasmic portion of the chain corresponds to 300–330 (RNQDVQKVLWAICCCCSTSKIPFRSRSPSDV). C313 is lipidated: S-palmitoyl cysteine. 3 positions are modified to phosphoserine: S324, S326, and S328.

Belongs to the G-protein coupled receptor 1 family. Expressed in both the forebrain and hindbrain, with the highest level in habenula. Lower level expression in the testis. Expressed in several metabolically active peripheral tissues, although at lower levels than in the central nervous system (CNS).

The protein resides in the cell membrane. Constitutively active G-protein coupled receptor that maintains high 3'-5'-cyclic adenosine monophosphate (cAMP) levels that a plays a role in serveral processes including meiotic arrest in oocytes or neuronal development via activation of numerous intracellular signaling pathways. Acts as an essential activator of thermogenic adipocytes and drives thermogenesis via its intrinsic G(s)-coupling activity without the requirement of a ligand. Has a potential role in modulating a number of brain functions, including behavioral responses to stress, amyloid-beta peptide generation in neurons. Stimulates neurite outgrowth in cerebellar granular neurons modulated via PKA, ERK, and most strongly PI3K-mediated signaling pathways. The protein is G-protein coupled receptor 3 (Gpr3) of Mus musculus (Mouse).